The following is a 155-amino-acid chain: Glutaredoxin-related protein 5, mitochondrial (155 aa).

The N-terminal 14 residues, 1 to 14 (MNSVFRSTARCLRS), are a transit peptide targeting the mitochondrion. The 104-residue stretch at 42 to 145 (QKNLEEMVKK…EELQKLGIRS (104 aa)) folds into the Glutaredoxin domain. K59 serves as a coordination point for glutathione. C67 contacts [2Fe-2S] cluster. Glutathione contacts are provided by residues 97–101 (RQGIK), I109, and 122–123 (CD).

In terms of assembly, homodimer.

The protein localises to the mitochondrion. Its function is as follows. Monothiol glutaredoxin involved in mitochondrial iron-sulfur (Fe/S) cluster transfer. Receives iron-sulfur clusters from scaffold protein ISCU and mediates their transfer to apoproteins, to the 4Fe/FS cluster biosynthesis machinery, or export from mitochondrion. Required for normal hemoglobin biosynthesis. In Danio rerio (Zebrafish), this protein is Glutaredoxin-related protein 5, mitochondrial (glrx5).